Reading from the N-terminus, the 70-residue chain is MPGIKVHPNESFDEAYRKFKKQVDRNLVVTEVRARRFFEPMTEIRKKQKISARKKMLKRLYMLRRYESRL.

This sequence belongs to the bacterial ribosomal protein bS21 family.

In Campylobacter jejuni subsp. jejuni serotype O:23/36 (strain 81-176), this protein is Small ribosomal subunit protein bS21.